Consider the following 354-residue polypeptide: Bifunctional transcriptional activator/DNA repair enzyme Ada (354 aa).

Residues Met-1–Glu-171 are methylphosphotriester-DNA--protein-cysteine methyltransferase. Residue Thr-34 coordinates DNA. Cys-38 serves as the catalytic Nucleophile; methyl group acceptor from methylphosphotriester. 2 residues coordinate Zn(2+): Cys-38 and Cys-42. DNA contacts are provided by Arg-43, Arg-45, and Arg-67. Zn(2+) contacts are provided by Cys-69 and Cys-72. The 99-residue stretch at Asp-85 to Gly-183 folds into the HTH araC/xylS-type domain. Positions Leu-102 to Lys-121 form a DNA-binding region, H-T-H motif. Residues Arg-181–Arg-354 are methylated-DNA--protein-cysteine methyltransferase. Cys-321 serves as the catalytic Nucleophile; methyl group acceptor from either O6-methylguanine or O4-methylthymine.

This sequence in the C-terminal section; belongs to the MGMT family. Requires Zn(2+) as cofactor.

The catalysed reaction is (2'-deoxyribonucleoside 5'-methylphosphotriester)-DNA + L-cysteinyl-[protein] = 2'-deoxyribonucleotide-DNA + S-methyl-L-cysteinyl-[protein] + H(+). It carries out the reaction a 6-O-methyl-2'-deoxyguanosine in DNA + L-cysteinyl-[protein] = S-methyl-L-cysteinyl-[protein] + a 2'-deoxyguanosine in DNA. The enzyme catalyses a 4-O-methyl-thymidine in DNA + L-cysteinyl-[protein] = a thymidine in DNA + S-methyl-L-cysteinyl-[protein]. Functionally, involved in the adaptive response to alkylation damage in DNA caused by alkylating agents. Repairs O6-methylguanine (O6-MeG) and O4-methylthymine (O4-MeT) in DNA. Repairs the methylated nucleobase in DNA by stoichiometrically transferring the methyl group to a cysteine residue in the enzyme (Cys-321). Also specifically repairs the Sp diastereomer of DNA methylphosphotriester lesions by the same mechanism, although the methyl transfer occurs onto a different cysteine residue (Cys-38). Cannot demethylate the other diastereomer, Rp-methylphosphotriester. This is a suicide reaction: the enzyme is irreversibly inactivated. Its function is as follows. The methylation of Ada by methylphosphotriesters in DNA leads to its activation as a transcriptional regulator that activates the transcription of its own gene, ada, and other alkylation resistance genes, alkA, alkB and aidB. The protein is Bifunctional transcriptional activator/DNA repair enzyme Ada (ada) of Escherichia coli (strain K12).